Here is a 263-residue protein sequence, read N- to C-terminus: Ubiquitin domain-containing protein 7SL RNA2 (263 aa).

The Ubiquitin-like 1 domain occupies 1 to 53 (MNVDIDTETGSSFSITIDFGETVLQIKEKIEKSQGIPVSKQILYLDGKALEDD). The interval 74-93 (ADPNQSNEQTEQSKQIDDKK) is disordered. A compositionally biased stretch (polar residues) spans 76 to 86 (PNQSNEQTEQS). One can recognise a Ubiquitin-like 2 domain in the interval 184–263 (FTVHVKPYQE…GDTIELIREK (80 aa)).

Belongs to the ubiquitin family. Expressed in seedlings, roots, stems, rosettes and flowers (at protein level).

The protein localises to the nucleus. Its function is as follows. Controls phase transition from the vegetative to the reproductive state. Involved in the maintenance of the shoot apical meristem (SAM) thus preventing inflorescence meristem (IM) formation and subsequent inflorescence stem development during flowering. Regulates leaf and organ morphology. This is Ubiquitin domain-containing protein 7SL RNA2 from Arabidopsis thaliana (Mouse-ear cress).